A 154-amino-acid polypeptide reads, in one-letter code: UPF0178 protein BAV3236 (154 aa).

The protein belongs to the UPF0178 family.

In Bordetella avium (strain 197N), this protein is UPF0178 protein BAV3236.